The primary structure comprises 123 residues: uncharacterized protein (123 aa).

Positions Ser35–Cys100 are disordered. The segment covering Asp37–Thr48 has biased composition (basic and acidic residues). The span at Ala85 to Ser97 shows a compositional bias: low complexity.

This is an uncharacterized protein from Homo sapiens (Human).